A 253-amino-acid polypeptide reads, in one-letter code: NAD-dependent protein deacetylase (253 aa).

The 251-residue stretch at 3–253 folds into the Deacetylase sirtuin-type domain; it reads APSLSSGVEQ…GETLGPFVGN (251 aa). Positions 29, 33, 40, 41, 106, 108, 109, and 126 each coordinate NAD(+). Position 40 (Phe40) interacts with nicotinamide. Residues Ile108 and Asp109 each contribute to the nicotinamide site. His126 acts as the Proton acceptor in catalysis. Cys134, Cys137, Cys159, and Cys162 together coordinate Zn(2+). Residues Ser200, Ser201, Asn225, Asp242, and Ile243 each coordinate NAD(+).

This sequence belongs to the sirtuin family. Class U subfamily. It depends on Zn(2+) as a cofactor.

Its subcellular location is the cytoplasm. It carries out the reaction N(6)-acetyl-L-lysyl-[protein] + NAD(+) + H2O = 2''-O-acetyl-ADP-D-ribose + nicotinamide + L-lysyl-[protein]. In terms of biological role, NAD-dependent protein deacetylase which modulates the activities of several enzymes which are inactive in their acetylated form. The chain is NAD-dependent protein deacetylase from Rhodopseudomonas palustris (strain ATCC BAA-98 / CGA009).